Consider the following 85-residue polypeptide: Large ribosomal subunit protein bL27 (85 aa).

Residues methionine 1–valine 23 form a disordered region.

This sequence belongs to the bacterial ribosomal protein bL27 family.

The sequence is that of Large ribosomal subunit protein bL27 from Aliarcobacter butzleri (strain RM4018) (Arcobacter butzleri).